The primary structure comprises 642 residues: Chaperone protein HtpG (642 aa).

The segment at 1–348 is a; substrate-binding; sequence MSTKIEQLEF…AQDLSLNVSR (348 aa). Residues 349 to 564 form a b region; that stretch reads EILQQDRQIR…AFSMSPALER (216 aa). The interval 565–642 is c; that stretch reads MYRASGQPVP…MLANRLARTV (78 aa).

Belongs to the heat shock protein 90 family. In terms of assembly, homodimer.

The protein resides in the cytoplasm. Its function is as follows. Molecular chaperone. Has ATPase activity. The polypeptide is Chaperone protein HtpG (Rhodococcus jostii (strain RHA1)).